The chain runs to 128 residues: MRHRKSGRHLSRTSSHRKAMFQNMAVSLFEHELIKTTLPKAKELRRVAEPLITLAKTDSVANRRLAFDRTRSKAIVGKLFNDLGKRYATREGGYLRILKCGFRAGDNAPMAYVELVDRAVGGEAVSAE.

Belongs to the bacterial ribosomal protein bL17 family. As to quaternary structure, part of the 50S ribosomal subunit. Contacts protein L32.

The polypeptide is Large ribosomal subunit protein bL17 (Pseudomonas fluorescens (strain Pf0-1)).